Reading from the N-terminus, the 259-residue chain is Ditrans,polycis-undecaprenyl-diphosphate synthase ((2E,6E)-farnesyl-diphosphate specific) (259 aa).

Residue Asp-32 is part of the active site. Asp-32 provides a ligand contact to Mg(2+). Residues 33–36 (GNGR), Trp-37, Arg-45, His-49, and 77–79 (STE) each bind substrate. The active-site Proton acceptor is the Asn-80. Residues Trp-81, Arg-83, Arg-203, and 209–211 (RIS) contribute to the substrate site. Glu-222 lines the Mg(2+) pocket.

Belongs to the UPP synthase family. Homodimer. The cofactor is Mg(2+).

It carries out the reaction 8 isopentenyl diphosphate + (2E,6E)-farnesyl diphosphate = di-trans,octa-cis-undecaprenyl diphosphate + 8 diphosphate. Catalyzes the sequential condensation of isopentenyl diphosphate (IPP) with (2E,6E)-farnesyl diphosphate (E,E-FPP) to yield (2Z,6Z,10Z,14Z,18Z,22Z,26Z,30Z,34E,38E)-undecaprenyl diphosphate (di-trans,octa-cis-UPP). UPP is the precursor of glycosyl carrier lipid in the biosynthesis of bacterial cell wall polysaccharide components such as peptidoglycan and lipopolysaccharide. The chain is Ditrans,polycis-undecaprenyl-diphosphate synthase ((2E,6E)-farnesyl-diphosphate specific) (uppS) from Lactiplantibacillus plantarum (strain ATCC BAA-793 / NCIMB 8826 / WCFS1) (Lactobacillus plantarum).